The chain runs to 495 residues: GTPase Der (495 aa).

EngA-type G domains lie at 3-166 and 208-381; these read PVVA…VQDE and IKLA…ACAT. Residues 9-16, 56-60, 118-121, 214-221, 261-265, and 326-329 each bind GTP; these read GRPNVGKS, DTGGI, NKTD, DTAGV, and NKWD. The 85-residue stretch at 382–466 folds into the KH-like domain; sequence RRVSTAMLTR…PIRIQFKEGE (85 aa).

Belongs to the TRAFAC class TrmE-Era-EngA-EngB-Septin-like GTPase superfamily. EngA (Der) GTPase family. Associates with the 50S ribosomal subunit.

Functionally, GTPase that plays an essential role in the late steps of ribosome biogenesis. The sequence is that of GTPase Der from Pectobacterium carotovorum subsp. carotovorum (strain PC1).